The following is a 429-amino-acid chain: Cytochrome bc1 complex Rieske iron-sulfur subunit (429 aa).

A disordered region spans residues 1-45 (MSRADDDAVGVPPTCGGRSDEEERRIVPGPNPQDGAKDGAKATAV). The next 3 membrane-spanning stretches (helical) occupy residues 96 to 116 (VAVW…IFLF), 137 to 157 (PLYG…AVLY), and 207 to 227 (FGVG…GGLI). The Rieske domain maps to 316-410 (RNPVMLIRIK…ITIDTDGYLV (95 aa)). Residues cysteine 353, histidine 355, cysteine 372, and histidine 375 each coordinate [2Fe-2S] cluster. A disulfide bridge links cysteine 358 with cysteine 374.

This sequence belongs to the Rieske iron-sulfur protein family. In terms of assembly, the cytochrome bc1 complex is composed of a cytochrome b (QcrB), the Rieske iron-sulfur protein (QcrA) and a diheme cytochrome c (QcrC) subunit. It depends on [2Fe-2S] cluster as a cofactor.

It localises to the cell membrane. In terms of biological role, iron-sulfur subunit of the cytochrome bc1 complex, an essential component of the respiratory electron transport chain required for ATP synthesis. The bc1 complex catalyzes the oxidation of menaquinol and the reduction of cytochrome c in the respiratory chain. The bc1 complex operates through a Q-cycle mechanism that couples electron transfer to generation of the proton gradient that drives ATP synthesis. This is Cytochrome bc1 complex Rieske iron-sulfur subunit (qcrA) from Mycobacterium tuberculosis (strain CDC 1551 / Oshkosh).